The sequence spans 493 residues: Glutamyl-tRNA(Gln) amidotransferase subunit A (493 aa).

Active-site charge relay system residues include lysine 79 and serine 159. Serine 183 functions as the Acyl-ester intermediate in the catalytic mechanism.

This sequence belongs to the amidase family. GatA subfamily. As to quaternary structure, heterotrimer of A, B and C subunits.

The catalysed reaction is L-glutamyl-tRNA(Gln) + L-glutamine + ATP + H2O = L-glutaminyl-tRNA(Gln) + L-glutamate + ADP + phosphate + H(+). Functionally, allows the formation of correctly charged Gln-tRNA(Gln) through the transamidation of misacylated Glu-tRNA(Gln) in organisms which lack glutaminyl-tRNA synthetase. The reaction takes place in the presence of glutamine and ATP through an activated gamma-phospho-Glu-tRNA(Gln). This Brucella melitensis biotype 2 (strain ATCC 23457) protein is Glutamyl-tRNA(Gln) amidotransferase subunit A.